The sequence spans 330 residues: Inactive hydroxysteroid dehydrogenase-like protein 1 (330 aa).

At Ala-2 the chain carries N-acetylalanine. The segment at 2-82 is required for mitochondria translocation; that stretch reads AAVDSFYLLY…SGATDGIGKA (81 aa). NADP(+)-binding positions include 74–80, Asp-125, and Lys-222; that span reads GATDGIG.

This sequence belongs to the short-chain dehydrogenases/reductases (SDR) family. 17-beta-HSD 3 subfamily. As to quaternary structure, interacts with STYXL1. Highly expressed in testis and ovary. Also detected in thyroid, spinal cord, adrenal gland, heart, placenta, skeletal muscle, small intestine, colon, spleen, prostate and pancreas.

Its subcellular location is the mitochondrion. In Homo sapiens (Human), this protein is Inactive hydroxysteroid dehydrogenase-like protein 1 (HSDL1).